Here is a 544-residue protein sequence, read N- to C-terminus: Ell-associated factor Eaf (544 aa).

Residues 147-544 are disordered; sequence QSVPMNMGHQ…LSSNSSDDDD (398 aa). The segment covering 193-202 has biased composition (basic and acidic residues); sequence SSKDKVDFKP. Phosphoserine is present on Ser-205. A compositionally biased stretch (low complexity) spans 264 to 273; it reads SGSSTGSSSG. Residues 287-299 show a composition bias toward basic residues; that stretch reads GKQRQAHGKRQQI. Low complexity-rich tracts occupy residues 305-319, 333-374, and 396-407; these read PPVQQQPHYQQQQQP, QPHP…QQRP, and ASQSVAQAAAVL. The span at 425–440 shows a compositional bias: acidic residues; it reads DSSDSDSGSDSDDSTE. Composition is skewed to low complexity over residues 450-483, 503-513, and 526-544; these read EQQQQQQLQHQQIQQPAPHHQRHQQQQSQQHMNQ, QQPQPQPQQQQ, and NDLLQNDLQLSSNSSDDDD.

Belongs to the EAF family.

The protein localises to the nucleus. Its function is as follows. Promotes transcriptional elongation by Su(Tpl)/ELL. Essential for development. In Drosophila persimilis (Fruit fly), this protein is Ell-associated factor Eaf.